The primary structure comprises 201 residues: GTP cyclohydrolase 1 (201 aa).

3 residues coordinate Zn(2+): cysteine 90, histidine 93, and cysteine 163.

This sequence belongs to the GTP cyclohydrolase I family. In terms of assembly, toroid-shaped homodecamer, composed of two pentamers of five dimers.

The catalysed reaction is GTP + H2O = 7,8-dihydroneopterin 3'-triphosphate + formate + H(+). It functions in the pathway cofactor biosynthesis; 7,8-dihydroneopterin triphosphate biosynthesis; 7,8-dihydroneopterin triphosphate from GTP: step 1/1. The protein is GTP cyclohydrolase 1 (folE) of Streptomyces coelicolor (strain ATCC BAA-471 / A3(2) / M145).